We begin with the raw amino-acid sequence, 460 residues long: Mitochondrial distribution and morphology protein 10 (460 aa).

It belongs to the MDM10 family. Component of the ER-mitochondria encounter structure (ERMES) or MDM complex, composed of MMM1, MDM10, MDM12 and MDM34. Associates with the mitochondrial outer membrane sorting assembly machinery SAM(core) complex.

Its subcellular location is the mitochondrion outer membrane. Component of the ERMES/MDM complex, which serves as a molecular tether to connect the endoplasmic reticulum and mitochondria. Components of this complex are involved in the control of mitochondrial shape and protein biogenesis and may function in phospholipid exchange. MDM10 is involved in the late assembly steps of the general translocase of the mitochondrial outer membrane (TOM complex). Functions in the TOM40-specific route of the assembly of outer membrane beta-barrel proteins, including the association of TOM40 with the receptor TOM22 and small TOM proteins. Can associate with the SAM(core) complex as well as the MDM12-MMM1 complex, both involved in late steps of the major beta-barrel assembly pathway, that is responsible for biogenesis of all outer membrane beta-barrel proteins. May act as a switch that shuttles between both complexes and channels precursor proteins into the TOM40-specific pathway. Plays a role in mitochondrial morphology and in the inheritance of mitochondria. This chain is Mitochondrial distribution and morphology protein 10, found in Candida glabrata (strain ATCC 2001 / BCRC 20586 / JCM 3761 / NBRC 0622 / NRRL Y-65 / CBS 138) (Yeast).